The primary structure comprises 185 residues: Ribosome-recycling factor (185 aa).

This sequence belongs to the RRF family.

It is found in the cytoplasm. Responsible for the release of ribosomes from messenger RNA at the termination of protein biosynthesis. May increase the efficiency of translation by recycling ribosomes from one round of translation to another. The polypeptide is Ribosome-recycling factor (Coxiella burnetii (strain CbuK_Q154) (Coxiella burnetii (strain Q154))).